Reading from the N-terminus, the 61-residue chain is Potassium channel toxin alpha-KTx 6.9 (61 aa).

The first 23 residues, 1–23 (MNAKFILLLLVVTTTTLLPDAKG), serve as a signal peptide directing secretion. Disulfide bonds link cysteine 29–cysteine 50, cysteine 35–cysteine 55, cysteine 39–cysteine 57, and cysteine 45–cysteine 60.

This sequence belongs to the short scorpion toxin superfamily. Potassium channel inhibitor family. Alpha-KTx 06 subfamily. Expressed by the venom gland.

The protein localises to the secreted. In terms of biological role, inhibits Kv1.2/KCNA2 and Kv1.3/KCNA3 voltage-gated potassium channels. The protein is Potassium channel toxin alpha-KTx 6.9 of Opistophthalmus carinatus (African yellow leg scorpion).